A 103-amino-acid chain; its full sequence is Large ribosomal subunit protein uL24 (103 aa).

It belongs to the universal ribosomal protein uL24 family. In terms of assembly, part of the 50S ribosomal subunit.

Its function is as follows. One of two assembly initiator proteins, it binds directly to the 5'-end of the 23S rRNA, where it nucleates assembly of the 50S subunit. One of the proteins that surrounds the polypeptide exit tunnel on the outside of the subunit. This chain is Large ribosomal subunit protein uL24, found in Actinobacillus pleuropneumoniae serotype 5b (strain L20).